Reading from the N-terminus, the 123-residue chain is SGSCEVKTCWWSQPDFRVVGDYLKDKYDSASEMIVEKHRESRGWVETLTPKYTSFKAPTERDLIYYDSSPNFCNPNPATGSFGTRHRKCNITSHGIDGCELLCCGRGHDTRTEKRREKCHCIF.

Serine 1 carries O-palmitoleoyl serine lipidation. Cysteine 89 and cysteine 104 are joined by a disulfide. Asparagine 90 is a glycosylation site (N-linked (GlcNAc...) asparagine).

The protein belongs to the Wnt family. Disulfide bonds have critical and distinct roles in secretion and activity. Loss of each conserved cysteine results in high molecular weight oxidized Wnt oligomers, which are formed through inter-Wnt disulfide bonding. Post-translationally, palmitoleoylation is required for efficient binding to frizzled receptors. Depalmitoleoylation leads to Wnt signaling pathway inhibition.

It is found in the secreted. It localises to the extracellular space. The protein resides in the extracellular matrix. Functionally, ligand for members of the frizzled family of seven transmembrane receptors. Functions in the canonical Wnt signaling pathway that results in activation of transcription factors of the TCF/LEF family. Required for normal embryonic mesoderm development and formation of caudal somites. Required for normal morphogenesis of the developing neural tube. This Alopias vulpinus (Common thresher shark) protein is Protein Wnt-3a (WNT-3A).